The following is a 307-amino-acid chain: Fructokinase (307 aa).

It belongs to the carbohydrate kinase PfkB family.

The catalysed reaction is D-fructose + ATP = D-fructose 6-phosphate + ADP + H(+). This Salmonella typhimurium protein is Fructokinase (scrK).